The primary structure comprises 222 residues: Small ribosomal subunit protein eS1 (222 aa).

Belongs to the eukaryotic ribosomal protein eS1 family.

The polypeptide is Small ribosomal subunit protein eS1 (Methanocaldococcus jannaschii (strain ATCC 43067 / DSM 2661 / JAL-1 / JCM 10045 / NBRC 100440) (Methanococcus jannaschii)).